Consider the following 186-residue polypeptide: Large ribosomal subunit protein uL10 (186 aa).

Belongs to the universal ribosomal protein uL10 family. Part of the ribosomal stalk of the 50S ribosomal subunit. The N-terminus interacts with L11 and the large rRNA to form the base of the stalk. The C-terminus forms an elongated spine to which L12 dimers bind in a sequential fashion forming a multimeric L10(L12)X complex.

Functionally, forms part of the ribosomal stalk, playing a central role in the interaction of the ribosome with GTP-bound translation factors. The chain is Large ribosomal subunit protein uL10 from Rhodococcus jostii (strain RHA1).